Here is a 285-residue protein sequence, read N- to C-terminus: uncharacterized protein (285 aa).

2 disordered regions span residues 115 to 139 and 152 to 183; these read AAGK…QERN and EHDV…NRGV. Composition is skewed to basic and acidic residues over residues 128–138 and 152–170; these read KEADVQTKQER and EHDV…DLKT.

This is an uncharacterized protein from Escherichia coli (strain K12).